A 204-amino-acid chain; its full sequence is Inactive ribonuclease-like protein 9 (204 aa).

A signal peptide spans 1–26 (MMRTLITTHPLLLLLLLQQLLQPVQF). Disulfide bonds link cysteine 97–cysteine 152, cysteine 115–cysteine 167, and cysteine 122–cysteine 129. Residues asparagine 130 and asparagine 142 are each glycosylated (N-linked (GlcNAc...) asparagine).

The protein belongs to the pancreatic ribonuclease family.

It localises to the secreted. Does not exhibit any ribonuclease activity. This is Inactive ribonuclease-like protein 9 (RNASE9) from Macaca mulatta (Rhesus macaque).